We begin with the raw amino-acid sequence, 52 residues long: UPF0391 membrane protein Tgr7_2500 (52 aa).

2 helical membrane-spanning segments follow: residues 4-24 (WALIFLIVAIIAGTLGFSGVA) and 29-49 (WIAQVLFLVFLALLVISLLGG).

The protein belongs to the UPF0391 family.

The protein resides in the cell membrane. This Thioalkalivibrio sulfidiphilus (strain HL-EbGR7) protein is UPF0391 membrane protein Tgr7_2500.